The chain runs to 75 residues: Small ribosomal subunit protein bS16 (75 aa).

It belongs to the bacterial ribosomal protein bS16 family.

This is Small ribosomal subunit protein bS16 from Aliarcobacter butzleri (strain RM4018) (Arcobacter butzleri).